Consider the following 241-residue polypeptide: Ribonuclease PH (241 aa).

Residues R87 and G125 to R127 contribute to the phosphate site.

This sequence belongs to the RNase PH family. In terms of assembly, homohexameric ring arranged as a trimer of dimers.

It carries out the reaction tRNA(n+1) + phosphate = tRNA(n) + a ribonucleoside 5'-diphosphate. Its function is as follows. Phosphorolytic 3'-5' exoribonuclease that plays an important role in tRNA 3'-end maturation. Removes nucleotide residues following the 3'-CCA terminus of tRNAs; can also add nucleotides to the ends of RNA molecules by using nucleoside diphosphates as substrates, but this may not be physiologically important. Probably plays a role in initiation of 16S rRNA degradation (leading to ribosome degradation) during starvation. The polypeptide is Ribonuclease PH (Dehalococcoides mccartyi (strain ATCC BAA-2100 / JCM 16839 / KCTC 5957 / BAV1)).